The primary structure comprises 266 residues: MKEIKVIIAGPRGRMGHEAVLLMERTEHFNLVAAVDYKHGGEKISDLPGMPALDTPIYADLHTCLEEVEADVLLDLTTPEVGKQHVTLAVERGLRSVIGTTGFTEEELKQLTETAKEKAVGTIIAPNFAIGAVLMMKFSQMAAKYFQDVEVIELHHDQKLDAPSGTAVKTVELIRQNRESKQQGHPNEVEQLKGARGANVDGIHIHSVRLPGLIAHQEVMFGGDGQMLTVRHDSFNRASFMSGVKLSIETVMNLDHLVYGLENIID.

10-15 (GPRGRM) is a binding site for NAD(+). Lys-38 is a binding site for NADP(+). Residues 99 to 101 (GTT) and 125 to 128 (APNF) each bind NAD(+). The Proton donor/acceptor role is filled by His-155. A (S)-2,3,4,5-tetrahydrodipicolinate-binding site is contributed by His-156. Lys-159 (proton donor) is an active-site residue. 165 to 166 (GT) is a (S)-2,3,4,5-tetrahydrodipicolinate binding site.

The protein belongs to the DapB family.

The protein localises to the cytoplasm. The catalysed reaction is (S)-2,3,4,5-tetrahydrodipicolinate + NAD(+) + H2O = (2S,4S)-4-hydroxy-2,3,4,5-tetrahydrodipicolinate + NADH + H(+). It carries out the reaction (S)-2,3,4,5-tetrahydrodipicolinate + NADP(+) + H2O = (2S,4S)-4-hydroxy-2,3,4,5-tetrahydrodipicolinate + NADPH + H(+). It functions in the pathway amino-acid biosynthesis; L-lysine biosynthesis via DAP pathway; (S)-tetrahydrodipicolinate from L-aspartate: step 4/4. In terms of biological role, catalyzes the conversion of 4-hydroxy-tetrahydrodipicolinate (HTPA) to tetrahydrodipicolinate. The chain is 4-hydroxy-tetrahydrodipicolinate reductase from Bacillus cereus (strain ATCC 10987 / NRS 248).